The sequence spans 244 residues: 3-deoxy-manno-octulosonate cytidylyltransferase (244 aa).

The protein belongs to the KdsB family.

The protein resides in the cytoplasm. The enzyme catalyses 3-deoxy-alpha-D-manno-oct-2-ulosonate + CTP = CMP-3-deoxy-beta-D-manno-octulosonate + diphosphate. The protein operates within nucleotide-sugar biosynthesis; CMP-3-deoxy-D-manno-octulosonate biosynthesis; CMP-3-deoxy-D-manno-octulosonate from 3-deoxy-D-manno-octulosonate and CTP: step 1/1. It participates in bacterial outer membrane biogenesis; lipopolysaccharide biosynthesis. Functionally, activates KDO (a required 8-carbon sugar) for incorporation into bacterial lipopolysaccharide in Gram-negative bacteria. The chain is 3-deoxy-manno-octulosonate cytidylyltransferase from Ruthia magnifica subsp. Calyptogena magnifica.